We begin with the raw amino-acid sequence, 339 residues long: Quinolinate synthase (339 aa).

Residues H63 and S81 each coordinate iminosuccinate. C126 contacts [4Fe-4S] cluster. Iminosuccinate contacts are provided by residues Y152–N154 and S169. C211 is a binding site for [4Fe-4S] cluster. Residues H237–E239 and T254 contribute to the iminosuccinate site. Position 297 (C297) interacts with [4Fe-4S] cluster.

It belongs to the quinolinate synthase family. Type 2 subfamily. [4Fe-4S] cluster serves as cofactor.

It localises to the cytoplasm. It carries out the reaction iminosuccinate + dihydroxyacetone phosphate = quinolinate + phosphate + 2 H2O + H(+). It functions in the pathway cofactor biosynthesis; NAD(+) biosynthesis; quinolinate from iminoaspartate: step 1/1. Catalyzes the condensation of iminoaspartate with dihydroxyacetone phosphate to form quinolinate. The chain is Quinolinate synthase from Xylella fastidiosa (strain Temecula1 / ATCC 700964).